The following is a 184-amino-acid chain: MIAALRGNIFEKDGGKILLDVNNVIYELNVSMITFSSVNDKGLFYITEIIKENEYTLYGFADKNEKKLFDSLIKLNGVGPKVALAICSTYTPQTFMDIIANHDINALKKIPGIGPKSAKRILMEMGEFEVVFEEQNPVFNQALSALESLGFNKNDIVKALNGIKSDNLEETIKLALKKLSKDIK.

Residues 1-61 (MIAALRGNIF…ENEYTLYGFA (61 aa)) are domain I. A domain II region spans residues 62–135 (DKNEKKLFDS…GEFEVVFEEQ (74 aa)). Glutamine 135 is a region of interest (flexible linker). Positions 135 to 184 (QNPVFNQALSALESLGFNKNDIVKALNGIKSDNLEETIKLALKKLSKDIK) are domain III.

Belongs to the RuvA family. Homotetramer. Forms an RuvA(8)-RuvB(12)-Holliday junction (HJ) complex. HJ DNA is sandwiched between 2 RuvA tetramers; dsDNA enters through RuvA and exits via RuvB. An RuvB hexamer assembles on each DNA strand where it exits the tetramer. Each RuvB hexamer is contacted by two RuvA subunits (via domain III) on 2 adjacent RuvB subunits; this complex drives branch migration. In the full resolvosome a probable DNA-RuvA(4)-RuvB(12)-RuvC(2) complex forms which resolves the HJ.

The protein localises to the cytoplasm. Its function is as follows. The RuvA-RuvB-RuvC complex processes Holliday junction (HJ) DNA during genetic recombination and DNA repair, while the RuvA-RuvB complex plays an important role in the rescue of blocked DNA replication forks via replication fork reversal (RFR). RuvA specifically binds to HJ cruciform DNA, conferring on it an open structure. The RuvB hexamer acts as an ATP-dependent pump, pulling dsDNA into and through the RuvAB complex. HJ branch migration allows RuvC to scan DNA until it finds its consensus sequence, where it cleaves and resolves the cruciform DNA. In Nautilia profundicola (strain ATCC BAA-1463 / DSM 18972 / AmH), this protein is Holliday junction branch migration complex subunit RuvA.